The following is a 730-amino-acid chain: ATP-dependent DNA helicase Hel308 (730 aa).

ATP-binding positions include Gln28 and 46 to 53 (IPTASGKT). One can recognise a Helicase ATP-binding domain in the interval 33 to 199 (EKGLLEGKNL…WLDAELVLSE (167 aa)). The DEAH box motif lies at 144 to 147 (DEVH). A Helicase C-terminal domain is found at 232-433 (AVNLVLDTIK…ALRTHILSTI (202 aa)).

Belongs to the helicase family. Hel308 subfamily. In terms of assembly, monomer.

It carries out the reaction Couples ATP hydrolysis with the unwinding of duplex DNA by translocating in the 3'-5' direction.. The catalysed reaction is ATP + H2O = ADP + phosphate + H(+). DNA-dependent ATPase and 3'-5' DNA helicase that may be involved in repair of stalled replication forks. This Methanosarcina mazei (strain ATCC BAA-159 / DSM 3647 / Goe1 / Go1 / JCM 11833 / OCM 88) (Methanosarcina frisia) protein is ATP-dependent DNA helicase Hel308.